A 383-amino-acid polypeptide reads, in one-letter code: 23S rRNA (uracil(747)-C(5))-methyltransferase RlmC (383 aa).

[4Fe-4S] cluster contacts are provided by C3, C11, C14, and C89. S-adenosyl-L-methionine-binding residues include Q214, F243, E270, and N315. C342 acts as the Nucleophile in catalysis.

This sequence belongs to the class I-like SAM-binding methyltransferase superfamily. RNA M5U methyltransferase family. RlmC subfamily.

It catalyses the reaction uridine(747) in 23S rRNA + S-adenosyl-L-methionine = 5-methyluridine(747) in 23S rRNA + S-adenosyl-L-homocysteine + H(+). Its function is as follows. Catalyzes the formation of 5-methyl-uridine at position 747 (m5U747) in 23S rRNA. This chain is 23S rRNA (uracil(747)-C(5))-methyltransferase RlmC, found in Actinobacillus succinogenes (strain ATCC 55618 / DSM 22257 / CCUG 43843 / 130Z).